We begin with the raw amino-acid sequence, 1224 residues long: Dynactin subunit 1 (1224 aa).

Residues 1-10 are compositionally biased toward basic residues; it reads MAQSRRHPHG. The disordered stretch occupies residues 1–30; it reads MAQSRRHPHGRASSAGPRMSTEASSKPLKV. In terms of domain architecture, CAP-Gly spans 49 to 91; it reads GATLXATGKWVGVILDEAKGKNDGTVQGRKYFTCEENHGIFVR. Disordered regions lie at residues 100–217, 374–402, and 888–918; these read DGAD…RSQV, SASEKQEHVKLQKQMEKKNTELESLRQQR, and PHCHHEQDATAMQEGEYDADRPQSKPTPPAE. Over residues 117–146 the composition is skewed to basic residues; it reads VPKRHSRXAAKGSKLRGAKPKKTTARRPKP. Positions 148–180 are enriched in low complexity; it reads RTPTSAPSSGTAGPSGSASASGGEMSSSEPSTP. Residues 205-540 are a coiled coil; it reads SPTKEEENLR…QEASAEKQQQ (336 aa). Residues 207 to 217 are compositionally biased toward basic and acidic residues; it reads TKEEENLRSQV. 2 coiled-coil regions span residues 936–1042 and 1081–1117; these read LKLE…EGLR and KDSPLLLQQIEALQLSIRHLKNENNRLKGAQMKLELA. The interval 1203–1224 is disordered; it reads WCSSSRARASPPASACSPPRPS. Over residues 1204 to 1224 the composition is skewed to low complexity; sequence CSSSRARASPPASACSPPRPS.

It belongs to the dynactin 150 kDa subunit family. Monomer and homodimer. Subunit of dynactin, a multiprotein complex part of a tripartite complex with dynein and a adapter, such as BICDL1, BICD2 or HOOK3. The dynactin complex is built around ACTR1A/ACTB filament and consists of an actin-related filament composed of a shoulder domain, a pointed end and a barbed end. Its length is defined by its flexible shoulder domain. The soulder is composed of 2 DCTN1 subunits, 4 DCTN2 and 2 DCTN3. DCTN1/p150(glued) binds directly to microtubules and to cytoplasmic dynein. As to expression, ubiquitously expressed.

It is found in the cytoplasm. It localises to the cytoskeleton. The protein resides in the microtubule organizing center. The protein localises to the centrosome. Its subcellular location is the centriole. It is found in the spindle. It localises to the cell cortex. In terms of biological role, part of the dynactin complex that activates the molecular motor dynein for ultra-processive transport along microtubules. Plays a key role in dynein-mediated retrograde transport of vesicles and organelles along microtubules by recruiting and tethering dynein to microtubules. Binds to both dynein and microtubules providing a link between specific cargos, microtubules and dynein. Essential for targeting dynein to microtubule plus ends, recruiting dynein to membranous cargos and enhancing dynein processivity (the ability to move along a microtubule for a long distance without falling off the track). Can also act as a brake to slow the dynein motor during motility along the microtubule. Can regulate microtubule stability by promoting microtubule formation, nucleation and polymerization and by inhibiting microtubule catastrophe in neurons. Inhibits microtubule catastrophe by binding both to microtubules and to tubulin, leading to enhanced microtubule stability along the axon. Plays a role in metaphase spindle orientation. Plays a role in centriole cohesion and subdistal appendage organization and function. Its recruitment to the centriole in a KIF3A-dependent manner is essential for the maintenance of centriole cohesion and the formation of subdistal appendage. Also required for microtubule anchoring at the mother centriole. Plays a role in primary cilia formation. This chain is Dynactin subunit 1 (DCTN1), found in Gallus gallus (Chicken).